The chain runs to 284 residues: Polyamine aminopropyltransferase (284 aa).

The region spanning 2 to 237 (ELWYTEQHTE…GHWLFGFASK (236 aa)) is the PABS domain. Q31 lines the S-methyl-5'-thioadenosine pocket. H62 and D86 together coordinate spermidine. S-methyl-5'-thioadenosine is bound by residues E106 and 137 to 138 (DG). Catalysis depends on D155, which acts as the Proton acceptor. Spermidine is bound at residue 155-158 (DSTD). P162 serves as a coordination point for S-methyl-5'-thioadenosine.

Belongs to the spermidine/spermine synthase family. As to quaternary structure, homodimer or homotetramer.

It localises to the cytoplasm. The catalysed reaction is S-adenosyl 3-(methylsulfanyl)propylamine + putrescine = S-methyl-5'-thioadenosine + spermidine + H(+). It functions in the pathway amine and polyamine biosynthesis; spermidine biosynthesis; spermidine from putrescine: step 1/1. In terms of biological role, catalyzes the irreversible transfer of a propylamine group from the amino donor S-adenosylmethioninamine (decarboxy-AdoMet) to putrescine (1,4-diaminobutane) to yield spermidine. This chain is Polyamine aminopropyltransferase, found in Alkaliphilus oremlandii (strain OhILAs) (Clostridium oremlandii (strain OhILAs)).